Consider the following 252-residue polypeptide: Mating-type switching protein swi10 (252 aa).

Residues 76-98 mediate DNA binding; that stretch reads TGICSLFLSLKYHHLHPEYIYSR.

Belongs to the ERCC1/RAD10/SWI10 family. As to quaternary structure, heterodimer composed of rad16 and swi10.

The protein resides in the nucleus. Involved in termination of copy-synthesis during mating-type switching. Involved in nucleotide excision repair of DNA damaged with UV light, bulky adducts, or cross-linking agents. Along with RAD16 forms an endonuclease that specifically degrades single-stranded DNA. This is Mating-type switching protein swi10 (swi10) from Schizosaccharomyces pombe (strain 972 / ATCC 24843) (Fission yeast).